The sequence spans 439 residues: Elongation factor Tu, mitochondrial (439 aa).

Residues 51-246 form the tr-type G domain; the sequence is KPHVNIGTIG…AVDSYITLPE (196 aa). Positions 60–67 are G1; it reads GHVDHGKT. 60-67 provides a ligand contact to GTP; that stretch reads GHVDHGKT. The interval 101 to 105 is G2; sequence GITIS. The tract at residues 122 to 125 is G3; sequence DCPG. GTP-binding positions include 122–126 and 177–180; these read DCPGH and NKVD. The segment at 177 to 180 is G4; that stretch reads NKVD. The G5 stretch occupies residues 214–216; the sequence is SAL.

It belongs to the TRAFAC class translation factor GTPase superfamily. Classic translation factor GTPase family. EF-Tu/EF-1A subfamily.

It localises to the mitochondrion. In terms of biological role, this protein promotes the GTP-dependent binding of aminoacyl-tRNA to the A-site of ribosomes during protein biosynthesis. This Schizosaccharomyces pombe (strain 972 / ATCC 24843) (Fission yeast) protein is Elongation factor Tu, mitochondrial (tuf1).